The primary structure comprises 1024 residues: Carbamoyl phosphate synthase large chain (1024 aa).

Residues 1–396 form a carboxyphosphate synthetic domain region; the sequence is MDIKKILVIG…AWQKAVRMID (396 aa). The ATP site is built by Arg-125, Arg-165, Gly-171, Gly-172, Lys-204, Leu-206, Glu-211, Gly-237, Val-238, His-239, Gln-280, and Glu-294. The ATP-grasp 1 domain occupies 129–323; the sequence is QKAMREAGIP…LAYIAAKLAL (195 aa). Gln-280, Glu-294, and Asn-296 together coordinate Mg(2+). Residues Gln-280, Glu-294, and Asn-296 each coordinate Mn(2+). The interval 397-536 is oligomerization domain; that stretch reads IGEPGLVGGP…LTYGGQYDDK (140 aa). The tract at residues 536 to 917 is carbamoyl phosphate synthetic domain; the sequence is KTPGVDYLVV…LKSWLSATPN (382 aa). The 190-residue stretch at 660 to 849 folds into the ATP-grasp 2 domain; it reads SKLLDRLGIK…YMSLVADVLT (190 aa). Arg-696, Lys-735, Glu-742, Gly-766, Val-767, His-768, Ser-769, Gln-809, and Glu-820 together coordinate ATP. Positions 809, 820, and 822 each coordinate Mg(2+). The Mn(2+) site is built by Gln-809, Glu-820, and Asn-822. An MGS-like domain is found at 917–1024; the sequence is NKIPSKTALI…KNGKLEVAPW (108 aa). Residues 918-1024 form an allosteric domain region; the sequence is KIPSKTALIY…KNGKLEVAPW (107 aa).

This sequence belongs to the CarB family. In terms of assembly, composed of two chains; the small (or glutamine) chain promotes the hydrolysis of glutamine to ammonia, which is used by the large (or ammonia) chain to synthesize carbamoyl phosphate. Tetramer of heterodimers (alpha,beta)4. It depends on Mg(2+) as a cofactor. Mn(2+) serves as cofactor.

It carries out the reaction hydrogencarbonate + L-glutamine + 2 ATP + H2O = carbamoyl phosphate + L-glutamate + 2 ADP + phosphate + 2 H(+). The catalysed reaction is hydrogencarbonate + NH4(+) + 2 ATP = carbamoyl phosphate + 2 ADP + phosphate + 2 H(+). It functions in the pathway amino-acid biosynthesis; L-arginine biosynthesis; carbamoyl phosphate from bicarbonate: step 1/1. The protein operates within pyrimidine metabolism; UMP biosynthesis via de novo pathway; (S)-dihydroorotate from bicarbonate: step 1/3. In terms of biological role, large subunit of the glutamine-dependent carbamoyl phosphate synthetase (CPSase). CPSase catalyzes the formation of carbamoyl phosphate from the ammonia moiety of glutamine, carbonate, and phosphate donated by ATP, constituting the first step of 2 biosynthetic pathways, one leading to arginine and/or urea and the other to pyrimidine nucleotides. The large subunit (synthetase) binds the substrates ammonia (free or transferred from glutamine from the small subunit), hydrogencarbonate and ATP and carries out an ATP-coupled ligase reaction, activating hydrogencarbonate by forming carboxy phosphate which reacts with ammonia to form carbamoyl phosphate. This is Carbamoyl phosphate synthase large chain from Pyrobaculum aerophilum (strain ATCC 51768 / DSM 7523 / JCM 9630 / CIP 104966 / NBRC 100827 / IM2).